A 156-amino-acid chain; its full sequence is Small ribosomal subunit protein uS7 (156 aa).

The protein belongs to the universal ribosomal protein uS7 family. In terms of assembly, part of the 30S ribosomal subunit. Contacts proteins S9 and S11.

Its function is as follows. One of the primary rRNA binding proteins, it binds directly to 16S rRNA where it nucleates assembly of the head domain of the 30S subunit. Is located at the subunit interface close to the decoding center, probably blocks exit of the E-site tRNA. This Vibrio atlanticus (strain LGP32) (Vibrio splendidus (strain Mel32)) protein is Small ribosomal subunit protein uS7.